Reading from the N-terminus, the 319-residue chain is Ribonucleoside-diphosphate reductase small chain (319 aa).

Fe cation-binding residues include Asp70, Glu101, and His104. Residue Tyr108 is part of the active site. Fe cation contacts are provided by Glu163, Glu197, and His200. The interaction with R1 stretch occupies residues 313–319; sequence FSLDVDF.

It belongs to the ribonucleoside diphosphate reductase small chain family. As to quaternary structure, interacts with RNR1/OPG080 subunit. Can interact with host RNR1 supunit. Requires Fe cation as cofactor.

It carries out the reaction a 2'-deoxyribonucleoside 5'-diphosphate + [thioredoxin]-disulfide + H2O = a ribonucleoside 5'-diphosphate + [thioredoxin]-dithiol. Ribonucleoside-diphosphate reductase holoenzyme provides the precursors necessary for viral DNA synthesis. Allows virus growth in non-dividing cells. Catalyzes the biosynthesis of deoxyribonucleotides from the corresponding ribonucleotides. The sequence is that of Ribonucleoside-diphosphate reductase small chain (OPG048) from Variola virus.